The following is a 324-amino-acid chain: Acetyl-coenzyme A carboxylase carboxyl transferase subunit alpha (324 aa).

The CoA carboxyltransferase C-terminal domain maps to 44–298 (QLERRAEELR…KQTLIDTIDE (255 aa)).

It belongs to the AccA family. In terms of assembly, acetyl-CoA carboxylase is a heterohexamer composed of biotin carboxyl carrier protein (AccB), biotin carboxylase (AccC) and two subunits each of ACCase subunit alpha (AccA) and ACCase subunit beta (AccD).

It localises to the cytoplasm. The enzyme catalyses N(6)-carboxybiotinyl-L-lysyl-[protein] + acetyl-CoA = N(6)-biotinyl-L-lysyl-[protein] + malonyl-CoA. Its pathway is lipid metabolism; malonyl-CoA biosynthesis; malonyl-CoA from acetyl-CoA: step 1/1. In terms of biological role, component of the acetyl coenzyme A carboxylase (ACC) complex. First, biotin carboxylase catalyzes the carboxylation of biotin on its carrier protein (BCCP) and then the CO(2) group is transferred by the carboxyltransferase to acetyl-CoA to form malonyl-CoA. The protein is Acetyl-coenzyme A carboxylase carboxyl transferase subunit alpha of Rippkaea orientalis (strain PCC 8801 / RF-1) (Cyanothece sp. (strain PCC 8801)).